A 107-amino-acid polypeptide reads, in one-letter code: Translation initiation factor IF-1, chloroplastic (107 aa).

Positions 8–83 (REKKNPREAK…SKGRIIYRLP (76 aa)) constitute an S1-like domain. A disordered region spans residues 81-107 (RLPHKDSKRTEDSKDTEDLKDTKDSKG). The span at 83-107 (PHKDSKRTEDSKDTEDLKDTKDSKG) shows a compositional bias: basic and acidic residues.

This sequence belongs to the IF-1 family. In terms of assembly, component of the 30S ribosomal translation pre-initiation complex which assembles on the 30S ribosome in the order IF-2 and IF-3, IF-1 and N-formylmethionyl-tRNA(fMet); mRNA recruitment can occur at any time during PIC assembly.

Its subcellular location is the plastid. The protein resides in the chloroplast. Its function is as follows. One of the essential components for the initiation of protein synthesis. Stabilizes the binding of IF-2 and IF-3 on the 30S subunit to which N-formylmethionyl-tRNA(fMet) subsequently binds. Helps modulate mRNA selection, yielding the 30S pre-initiation complex (PIC). Upon addition of the 50S ribosomal subunit IF-1, IF-2 and IF-3 are released leaving the mature 70S translation initiation complex. In Oryza sativa subsp. indica (Rice), this protein is Translation initiation factor IF-1, chloroplastic.